A 555-amino-acid polypeptide reads, in one-letter code: Putative ankyrin repeat protein L283 (555 aa).

4 ANK repeats span residues 364-389 (TKVN…EDDI), 390-420 (VFKK…DINE), 422-447 (IKLA…KVRC), and 455-488 (GYLE…EGGK).

This Acanthamoeba polyphaga mimivirus (APMV) protein is Putative ankyrin repeat protein L283.